The primary structure comprises 310 residues: MASKDFAIGMILSQIMVGFLGNFFLLYHYSFLHFTRGMLQSTDLTLKHLTIANSLVILSKGIPQTMAAFGLKDSLSDIGCKFVFYVHRVGRAVCTGNACLLSVFQVITISSSEFRWAELKLHAHKYIRSFILVLCWILNTLVNITVPLHVTGKWNSINSTKTNDYGYCSGGSRSRIPHSLHIVLLSSLDVLCLGLMTLASGSMVFILHRLKQQVQHIHGTNLSPRSSPESRVTQSILVLVSTLCYFTRSPPSLHMSLFPNPSWWPLNASALITACFPTVSPFVLMSRHPRIPRLGSACCGRNPQFPKLVR.

At 1-5 the chain is on the extracellular side; that stretch reads MASKD. Residues 6 to 26 form a helical membrane-spanning segment; sequence FAIGMILSQIMVGFLGNFFLL. The Cytoplasmic portion of the chain corresponds to 27-50; sequence YHYSFLHFTRGMLQSTDLTLKHLT. A helical transmembrane segment spans residues 51-71; sequence IANSLVILSKGIPQTMAAFGL. Residues 72–91 are Extracellular-facing; that stretch reads KDSLSDIGCKFVFYVHRVGR. The helical transmembrane segment at 92–112 threads the bilayer; that stretch reads AVCTGNACLLSVFQVITISSS. Over 113 to 129 the chain is Cytoplasmic; that stretch reads EFRWAELKLHAHKYIRS. The helical transmembrane segment at 130 to 150 threads the bilayer; the sequence is FILVLCWILNTLVNITVPLHV. At 151-186 the chain is on the extracellular side; that stretch reads TGKWNSINSTKTNDYGYCSGGSRSRIPHSLHIVLLS. N-linked (GlcNAc...) asparagine glycosylation is present at Asn158. The chain crosses the membrane as a helical span at residues 187–207; the sequence is SLDVLCLGLMTLASGSMVFIL. Residues 208–235 lie on the Cytoplasmic side of the membrane; it reads HRLKQQVQHIHGTNLSPRSSPESRVTQS. Residues 236–258 traverse the membrane as a helical segment; it reads ILVLVSTLCYFTRSPPSLHMSLF. Residues 259–263 are Extracellular-facing; sequence PNPSW. A helical transmembrane segment spans residues 264 to 284; it reads WPLNASALITACFPTVSPFVL. The Cytoplasmic segment spans residues 285-310; it reads MSRHPRIPRLGSACCGRNPQFPKLVR.

This sequence belongs to the G-protein coupled receptor 1 family.

It localises to the cell membrane. Its function is as follows. Putative pheromone receptor. The polypeptide is Vomeronasal type-1 receptor 3 (VN1R3) (Pan troglodytes (Chimpanzee)).